The primary structure comprises 348 residues: Isopentenyl-diphosphate delta-isomerase (348 aa).

Residue 9–10 coordinates substrate; sequence RK. FMN is bound by residues 68–70, serine 98, and asparagine 127; that span reads AMT. Glutamine 157 provides a ligand contact to substrate. Residue glutamate 158 participates in Mg(2+) binding. Residues lysine 188, serine 213, threonine 218, and 286–287 contribute to the FMN site; that span reads AG.

It belongs to the IPP isomerase type 2 family. Homooctamer. Dimer of tetramers. FMN serves as cofactor. Requires NADPH as cofactor. It depends on Mg(2+) as a cofactor.

The protein resides in the cytoplasm. The enzyme catalyses isopentenyl diphosphate = dimethylallyl diphosphate. Its function is as follows. Involved in the biosynthesis of isoprenoids. Catalyzes the 1,3-allylic rearrangement of the homoallylic substrate isopentenyl (IPP) to its allylic isomer, dimethylallyl diphosphate (DMAPP). The sequence is that of Isopentenyl-diphosphate delta-isomerase from Limosilactobacillus reuteri subsp. reuteri (strain JCM 1112) (Lactobacillus reuteri).